Here is a 250-residue protein sequence, read N- to C-terminus: Probable transcriptional regulatory protein Rxyl_1318 (250 aa).

It belongs to the TACO1 family.

The protein localises to the cytoplasm. In Rubrobacter xylanophilus (strain DSM 9941 / JCM 11954 / NBRC 16129 / PRD-1), this protein is Probable transcriptional regulatory protein Rxyl_1318.